Reading from the N-terminus, the 184-residue chain is Ribosome-recycling factor (184 aa).

The segment at 134–167 (MNDQLKKDEKNGDITEDELRSGTEDVQKATDNSI) is disordered.

The protein belongs to the RRF family.

The protein resides in the cytoplasm. Responsible for the release of ribosomes from messenger RNA at the termination of protein biosynthesis. May increase the efficiency of translation by recycling ribosomes from one round of translation to another. This Staphylococcus aureus (strain Mu3 / ATCC 700698) protein is Ribosome-recycling factor.